Consider the following 473-residue polypeptide: H(+)/Cl(-) exchange transporter ClcA (473 aa).

The Cytoplasmic segment spans residues 1–32; it reads MKTDTSTFLAQQIVRLRRRDQIRRLMQRDKTP. A helical transmembrane segment spans residues 33–69; that stretch reads LAILFMAAVVGTLTGLVGVAFEKTVSWVQNMRIGALV. The Periplasmic portion of the chain corresponds to 70–76; it reads QVADHAF. The chain crosses the membrane as a helical span at residues 77-100; sequence LLWPLAFILSALLAMVGYFLVRKF. The Selectivity filter part_1 motif lies at 106-110; it reads GSGIP. Chloride is bound at residue S107. Positions 109–116 form an intramembrane region, helical; sequence IPEIEGAL. The Cytoplasmic portion of the chain corresponds to 117-123; that stretch reads EELRPVR. 2 helical membrane passes run 124–141 and 148–166; these read WWRV…TLGA and EGPT…LDVF. Positions 146–150 match the Selectivity filter part_2 motif; it reads GREGP. Over 167 to 176 the chain is Cytoplasmic; it reads RMRSAEARHT. 2 consecutive intramembrane regions (helical) follow at residues 177–189 and 193–201; these read LLAT…LSAA and PLAGILFII. The Cytoplasmic portion of the chain corresponds to 202–214; it reads EEMRPQFRYNLIS. A helical transmembrane segment spans residues 215 to 232; it reads IKAVFTGVIMSSIVFRIF. Topologically, residues 233–252 are periplasmic; sequence NGEAPIIEVGKLSDAPVNTL. The helical transmembrane segment at 253–281 threads the bilayer; sequence WLYLILGIIFGCVGPVFNSLVLRTQDMFQ. The Cytoplasmic portion of the chain corresponds to 282 to 287; it reads RFHGGE. A helical membrane pass occupies residues 288-309; it reads IKKWVLMGGAIGGLCGILGLIE. The Periplasmic portion of the chain corresponds to 310-329; it reads PAAAGGGFNLIPIAAAGNFS. 2 helical membrane passes run 330 to 349 and 355 to 376; these read VGLL…LCFS and GIFA…MAAA. A Selectivity filter part_3 motif is present at residues 355-359; it reads GIFAP. 2 residues coordinate chloride: I356 and F357. At 377–386 the chain is on the periplasmic side; that stretch reads VLFPQYHLEA. The helical intramembrane region spans 387 to 401; it reads GTFAIAGMGALMAAS. Residues 402–404 constitute an intramembrane region (note=Loop between two helices); that stretch reads VRA. An intramembrane region (helical) is located at residues 405–416; the sequence is PLTGIVLVLEMT. An intramembrane region (note=Loop between two helices) is located at residues 417-421; that stretch reads DNYQL. Residues 422 to 438 traverse the membrane as a helical segment; it reads ILPMIITCLGATLLAQF. At 439-473 the chain is on the cytoplasmic side; the sequence is LGGKPLYSTILARTLAKQDAEQAAKNQNAPAGENT. Chloride is bound at residue Y445.

This sequence belongs to the chloride channel (TC 2.A.49) family. ClcA subfamily. Homodimer.

The protein resides in the cell inner membrane. It carries out the reaction 2 chloride(in) + H(+)(out) = 2 chloride(out) + H(+)(in). Its function is as follows. Proton-coupled chloride transporter. Functions as antiport system and exchanges two chloride ions for 1 proton. Probably acts as an electrical shunt for an outwardly-directed proton pump that is linked to amino acid decarboxylation, as part of the extreme acid resistance (XAR) response. The protein is H(+)/Cl(-) exchange transporter ClcA of Salmonella typhi.